A 509-amino-acid polypeptide reads, in one-letter code: Cytochrome P450 monooxygenase LUC2 (509 aa).

The chain crosses the membrane as a helical span at residues 30–50 (TKVLVTFLTIVIIAPRVFTVI). Cys-456 provides a ligand contact to heme.

This sequence belongs to the cytochrome P450 family. Requires heme as cofactor.

The protein resides in the membrane. It functions in the pathway mycotoxin biosynthesis. Functionally, cytochrome P450 monooxygenase; part of the gene cluster that mediates the biosynthesis of the mycotoxin lucilactaene and the lucilactaene-related compound NG-391 that act as cell cycle inhibitors with potent growth inhibitory activity against malarial parasites, moderate growth inhibitory activity against cancer cells, and no activity against bacteria and fungi. Within the pathway, LUC2 performs C-20 methyl group hydroxylation of several intermediates. LUC2 does not perform the full oxidation of the C-20 methyl group into carboxylic acid, which is a prerequisite for the final methylation step. The pathway begins with the hybrid PKS-NRPS synthetase LUC5 which is responsible for the condensation of one acetyl-coenzyme A (CoA) unit with six malonyl-CoA units and the amide linkage of the arising heptaketide and homoserine, subsequently releasing the first intermediate prelucilactaene B. Both the cytochrome P450 monooxygenase LUC2 and the hydrolase LUC6 function in parallel in modification of prelucilactaene B. LUC6 may catalyze the 2-pyrrolidone ring formation to form prelucilactaene C from prelucilactaene B, followed by C-15 hydroxylation by the same enzyme to give prelucilactaene D, which is then converted to prelucilactaene E by epoxidation, and finally to prelucilactaene F by cyclization. Prelucilactane D, prelucilactaene E, and prelucilactaene F can be converted to dihydrolucilactaene, NG391, and lucilactaene, respectively, via C-20 methyl group hydroxylation by the cytochrome P450 monooxygenase LUC2. However, LUC2, unlike FUS8 in fusarin C biosynthesis, is not enough for the full oxidation of the C-20 methyl group into carboxylic acid, which is a prerequisite for the final methylation step. The aldehyde dehydrogenase LUC3 is involved in the biosynthesis by further oxidation of the C-20 alcoholic analog prelucilactaene G into a carboxylic derivative. This unidentified carboxylic derivative may be converted to demethyllucilactaene. As the last step, the methyltransferase LUC1 methylates the hydroxyl group at C-21 of demethyllucilactaene to generate lucilactaene. In Fusarium sp, this protein is Cytochrome P450 monooxygenase LUC2.